The primary structure comprises 155 residues: 6,7-dimethyl-8-ribityllumazine synthase (155 aa).

Residues F23, 57–59, and 81–83 contribute to the 5-amino-6-(D-ribitylamino)uracil site; these read AYE and AVI. 86 to 87 contacts (2S)-2-hydroxy-3-oxobutyl phosphate; that stretch reads AT. The active-site Proton donor is H89. A 5-amino-6-(D-ribitylamino)uracil-binding site is contributed by F114. R128 is a (2S)-2-hydroxy-3-oxobutyl phosphate binding site.

It belongs to the DMRL synthase family.

The enzyme catalyses (2S)-2-hydroxy-3-oxobutyl phosphate + 5-amino-6-(D-ribitylamino)uracil = 6,7-dimethyl-8-(1-D-ribityl)lumazine + phosphate + 2 H2O + H(+). Its pathway is cofactor biosynthesis; riboflavin biosynthesis; riboflavin from 2-hydroxy-3-oxobutyl phosphate and 5-amino-6-(D-ribitylamino)uracil: step 1/2. Catalyzes the formation of 6,7-dimethyl-8-ribityllumazine by condensation of 5-amino-6-(D-ribitylamino)uracil with 3,4-dihydroxy-2-butanone 4-phosphate. This is the penultimate step in the biosynthesis of riboflavin. The polypeptide is 6,7-dimethyl-8-ribityllumazine synthase (Desulfotalea psychrophila (strain LSv54 / DSM 12343)).